An 807-amino-acid polypeptide reads, in one-letter code: Glycerol-3-phosphate acyltransferase (807 aa).

The short motif at 308-313 (CHRSHM) is the HXXXXD motif element.

Belongs to the GPAT/DAPAT family.

The protein resides in the cell inner membrane. The catalysed reaction is sn-glycerol 3-phosphate + an acyl-CoA = a 1-acyl-sn-glycero-3-phosphate + CoA. It functions in the pathway phospholipid metabolism; CDP-diacylglycerol biosynthesis; CDP-diacylglycerol from sn-glycerol 3-phosphate: step 1/3. The polypeptide is Glycerol-3-phosphate acyltransferase (Shewanella sp. (strain W3-18-1)).